The chain runs to 413 residues: SET and MYND domain-containing protein DDB_G0273591 (413 aa).

One can recognise an SET domain in the interval 6–311; sequence DGLKLSNSEL…KGDQINISYL (306 aa). The MYND-type zinc finger occupies 51-95; the sequence is CYNCIKLIKSPSPQQVPRCFGCNEVWYCSEKCKQDNQAKHQHYEC. The tract at residues 205 to 232 is disordered; that stretch reads DNNNNNNNNNNNNNNNNNNNNNNNNNNN. Residues 216–243 adopt a coiled-coil conformation; sequence NNNNNNNNNNNNNNNNNNNIEELIKLIR.

It belongs to the class V-like SAM-binding methyltransferase superfamily.

Probable methyltransferase. In Dictyostelium discoideum (Social amoeba), this protein is SET and MYND domain-containing protein DDB_G0273591.